The sequence spans 603 residues: DNA mismatch repair protein MutL (603 aa).

This sequence belongs to the DNA mismatch repair MutL/HexB family.

Functionally, this protein is involved in the repair of mismatches in DNA. It is required for dam-dependent methyl-directed DNA mismatch repair. May act as a 'molecular matchmaker', a protein that promotes the formation of a stable complex between two or more DNA-binding proteins in an ATP-dependent manner without itself being part of a final effector complex. The protein is DNA mismatch repair protein MutL of Bradyrhizobium diazoefficiens (strain JCM 10833 / BCRC 13528 / IAM 13628 / NBRC 14792 / USDA 110).